Reading from the N-terminus, the 1052-residue chain is SWI/SNF-related matrix-associated actin-dependent regulator of chromatin subfamily A member 5 (1052 aa).

The span at 1-15 shows a compositional bias: pro residues; sequence MSSAAEPPPPPPPES. A disordered region spans residues 1 to 83; sequence MSSAAEPPPP…QEPDPTYEEK (83 aa). Position 2 is an N-acetylserine (S2). Positions 16–55 are enriched in low complexity; the sequence is APSKPAASIASGGSNSSNKGGPEGVAAQAVASAASAGPAD. S66 is subject to Phosphoserine. Basic and acidic residues predominate over residues 69 to 83; sequence KQKEIQEPDPTYEEK. Residue K83 forms a Glycyl lysine isopeptide (Lys-Gly) (interchain with G-Cter in SUMO2) linkage. Residue T113 is modified to Phosphothreonine. Residues S116, S137, and S171 each carry the phosphoserine modification. Positions 192–357 constitute a Helicase ATP-binding domain; sequence ISLYENGING…WSLLNFLLPD (166 aa). 205–212 contacts ATP; that stretch reads DEMGLGKT. The short motif at 308-311 is the DEAH box element; sequence DEAH. K440 bears the N6-acetyllysine mark. The Helicase C-terminal domain maps to 487–638; sequence VLDKLLPKLK…SIVIQQGRLV (152 aa). Residues K644, K647, K694, K722, and K735 each participate in a glycyl lysine isopeptide (Lys-Gly) (interchain with G-Cter in SUMO2) cross-link. Phosphoserine is present on residues S755 and S825. 2 SANT domains span residues 840 to 892 and 943 to 1007; these read QGFT…ERCN and KGKN…LITL. K966 is covalently cross-linked (Glycyl lysine isopeptide (Lys-Gly) (interchain with G-Cter in SUMO2)). Residues 1015–1052 are disordered; the sequence is LEEKEKAEKKKRGPKPSTQKRKMDGAPDGRGRKKKLKL. Basic residues predominate over residues 1023–1034; it reads KKKRGPKPSTQK. Positions 1035 to 1044 are enriched in basic and acidic residues; the sequence is RKMDGAPDGR.

Belongs to the SNF2/RAD54 helicase family. ISWI subfamily. As to quaternary structure, component of the ACF-5 ISWI chromatin-remodeling complex (also called the ACF/WCRF complex) at least composed of SMARCA5/SNF2H and BAZ1A/ACF1, which regulates the spacing of histone octamers on the DNA template to facilitate access to DNA. Within the complex interacts with BAZ1A/ACF1; the interaction is direct and is required to slide nucleosomes from end to center positions on a DNA template in an ATP-dependent manner. Component of the CHRAC ISWI chromatin-remodeling complex at least composed of SMARCA5/SNF2H, BAZ1A/ACF1, CHRAC1 and POLE3; the complex preferentially binds DNA through the CHRAC1-POLE3 heterodimer and possesses ATP-dependent nucleosome-remodeling activity. Within the complex interacts with BAZ1A/ACF1; the interaction is direct and promotes the interaction with the POLE3-CHRAC1 heterodimer. Within the complex interacts with the POLE3-CHRAC1 heterodimer; the interaction is direct and enhances nucleosome sliding activity by the SMARCA5/SNF2H and BAZ1A/ACF1 interaction. Neither POLE3 nor CHRAC1 enhances nucleosome sliding activity of the ACF-5 ISWI chromatin remodeling complex. Component of the WICH-5 ISWI chromatin-remodeling complex (also called the WICH complex) at least composed of SMARCA5/SNF2H and BAZ1B/WSTF, which regulates the spacing of histone octamers on the DNA template to facilitate access to DNA. Within the complex interacts with BAZ1B/WSTF. Component of the NoRC-5 ISWI chromatin-remodeling complex (also called the NoRC chromatin-remodeling complex) at least composed of SMARCA5/SNF2H and BAZ2A/TIP5; the complex suppresses rDNA transcription by a combination of nucleosome remodeling, histone deacetylation, and DNA methylation. Within the complex interacts with BAZ2A/TIP5. Within the complex interacts with HDAC1. Component of the BRF-5 ISWI chromatin-remodeling complex at least composed of SMARCA5/SNF2H and BAZ2B. Within the complex interacts with BAZ2B. Component of the NURF-5 ISWI chromatin-remodeling complex at least composed of SMARCA5/SNF2H and BPTF. Within the complex interacts with BPFT. Component of the CERF-5 ISWI chromatin-remodeling complex at least composed of SMARCA5/SNF2H and CECR2. LUZP1 is detected as part of the CERF-5 complex in embryonic stem cells where it is involved in complex stabilization but is not detected in the complex in the testis. Within the complex interacts with CECR2. Component of the RSF-5 ISWI chromatin-remodeling complex (also called the RSF complex) at least composed of SMARCA5/SNF2H and RSF1. Within the complex interacts with RSF1. Interacts with the cohesin complex component RAD21; the interaction is direct. Interacts with the NuRD complex components HDAC2, RBBP4 and CHD4; the interactions are direct. Interacts with PCNA. Component of the B-WICH complex, at least composed of SMARCA5/SNF2H, BAZ1B/WSTF, SF3B1, DEK, MYO1C, ERCC6, MYBBP1A and DDX21 which positively regulates RNA polymerase III transcription. Interacts with MYO1C. Interacts with BEND3. Interacts with SIRT6; promoting recruitment to DNA damage sites. In terms of assembly, (Microbial infection) Interacts with JC virus small t antigen. (Microbial infection) Interacts with Epstein Barr virus (EBV) lytic switch protein BZLF1; this interaction participates to the activation of early lytic viral genes by BZLF1. Ubiquitously expressed.

Its subcellular location is the nucleus. The protein localises to the chromosome. It catalyses the reaction ATP + H2O = ADP + phosphate + H(+). Its function is as follows. ATPase that possesses intrinsic ATP-dependent nucleosome-remodeling activity. Catalytic subunit of ISWI chromatin-remodeling complexes, which form ordered nucleosome arrays on chromatin and facilitate access to DNA during DNA-templated processes such as DNA replication, transcription, and repair; this may require intact histone H4 tails. Within the ISWI chromatin-remodeling complexes, slides edge- and center-positioned histone octamers away from their original location on the DNA template. Catalytic activity and histone octamer sliding propensity is regulated and determined by components of the ISWI chromatin-remodeling complexes. The BAZ1A/ACF1-, BAZ1B/WSTF-, BAZ2A/TIP5- and BAZ2B-containing ISWI chromatin-remodeling complexes regulate the spacing of nucleosomes along the chromatin and have the ability to slide mononucleosomes to the center of a DNA template in an ATP-dependent manner. The CECR2- and RSF1-containing ISWI chromatin-remodeling complexes do not have the ability to slide mononucleosomes to the center of a DNA template. Binds to core histones together with RSF1, and is required for the assembly of regular nucleosome arrays by the RSF-5 ISWI chromatin-remodeling complex. Involved in DNA replication and together with BAZ1A/ACF1 is required for replication of pericentric heterochromatin in S-phase. Probably plays a role in repression of RNA polymerase I dependent transcription of the rDNA locus, through the recruitment of the SIN3/HDAC1 corepressor complex to the rDNA promoter. Essential component of the WICH-5 ISWI chromatin-remodeling complex (also called the WICH complex), a chromatin-remodeling complex that mobilizes nucleosomes and reconfigures irregular chromatin to a regular nucleosomal array structure. The WICH-5 ISWI chromatin-remodeling complex regulates the transcription of various genes, has a role in RNA polymerase I transcription. Within the B-WICH complex has a role in RNA polymerase III transcription. Mediates the histone H2AX phosphorylation at 'Tyr-142', and is involved in the maintenance of chromatin structures during DNA replication processes. Essential component of NoRC-5 ISWI chromatin-remodeling complex, a complex that mediates silencing of a fraction of rDNA by recruiting histone-modifying enzymes and DNA methyltransferases, leading to heterochromatin formation and transcriptional silencing. In Homo sapiens (Human), this protein is SWI/SNF-related matrix-associated actin-dependent regulator of chromatin subfamily A member 5.